Consider the following 582-residue polypeptide: Peptidyl-prolyl cis-trans isomerase FKBP10 (582 aa).

The N-terminal stretch at Met-1 to Ala-26 is a signal peptide. PPIase FKBP-type domains are found at residues Gly-62 to Trp-150, Gly-174 to His-262, and Gly-286 to His-374. Residues Asn-70, Asn-182, Asn-294, Asn-310, Asn-352, Asn-393, and Asn-407 are each glycosylated (N-linked (GlcNAc...) asparagine). Residues Gly-399 to Glu-486 enclose the PPIase FKBP-type 4 domain. EF-hand domains lie at Trp-497 to Glu-532 and Asp-542 to Arg-577. Ca(2+) contacts are provided by Asp-510, Asn-512, Asp-514, Glu-516, Glu-521, Asp-555, Asn-557, Asp-559, Lys-561, and Glu-566. The segment at Gly-533–Leu-582 is disordered. Positions Arg-556–Leu-582 are enriched in basic and acidic residues. The Prevents secretion from ER motif lies at His-579 to Leu-582.

Post-translationally, glycosylated and phosphorylated.

The protein localises to the endoplasmic reticulum lumen. It carries out the reaction [protein]-peptidylproline (omega=180) = [protein]-peptidylproline (omega=0). With respect to regulation, inhibited by both FK506 and rapamycin, but not by cyclosporin A. Its function is as follows. PPIases accelerate the folding of proteins during protein synthesis. The chain is Peptidyl-prolyl cis-trans isomerase FKBP10 (FKBP10) from Homo sapiens (Human).